The following is a 292-amino-acid chain: Coiled-coil domain-containing protein 137 (292 aa).

Residues 1–16 (MAGLRRGAAAVAPAGT) show a composition bias toward low complexity. 4 disordered regions span residues 1 to 94 (MAGL…AQAA), 139 to 183 (FLSK…EKAA), 205 to 243 (PELTAKPRMSVSRDQPGKKSLMLKKLLSPGSVSQPLTTS), and 263 to 292 (ALKRLQQQRQETQSPQPPHLPPGKKPEMQL). Composition is skewed to basic and acidic residues over residues 57-78 (KNQDEQEIPFRLREIMRSRQEM), 155-164 (PKKEKSERKK), and 173-183 (KARQRREEKAA). The stretch at 156-194 (KKEKSERKKAFQKRRLDKARQRREEKAAERLEQELLQDT) forms a coiled coil. Residues 222–232 (KKSLMLKKLLS) show a composition bias toward low complexity. Ser-232 bears the Phosphoserine mark. Positions 234-243 (GSVSQPLTTS) are enriched in polar residues. The stretch at 247–276 (QRIVAEERERAVNAYRALKRLQQQRQETQS) forms a coiled coil.

The protein resides in the chromosome. The sequence is that of Coiled-coil domain-containing protein 137 (CCDC137) from Bos taurus (Bovine).